Consider the following 189-residue polypeptide: uncharacterized protein (189 aa).

The N-terminal stretch at 1 to 19 (MKRVLFFLLMIFVSFGVIA) is a signal peptide.

This is an uncharacterized protein from Escherichia coli (strain K12).